Reading from the N-terminus, the 49-residue chain is Light-harvesting protein B-875 beta chain (49 aa).

Residues 2-27 (ADKSDLGYTGLTDEQAQELHSVYMSG) lie on the Cytoplasmic side of the membrane. 2 residues coordinate a bacteriochlorophyll: His-21 and His-39. Residues 28 to 45 (LWPFSAVAIVAHLAVYIW) traverse the membrane as a helical; Signal-anchor for type II membrane protein segment. Residues 46–49 (RPWF) lie on the Periplasmic side of the membrane.

The protein belongs to the antenna complex beta subunit family. The core complex is formed by different alpha and beta chains, binding bacteriochlorophyll molecules, and arranged most probably in tetrameric structures disposed around the reaction center. The non-pigmented gamma chains may constitute additional components.

The protein resides in the cell inner membrane. Its function is as follows. Antenna complexes are light-harvesting systems, which transfer the excitation energy to the reaction centers. The protein is Light-harvesting protein B-875 beta chain (pufB) of Cereibacter sphaeroides (Rhodobacter sphaeroides).